Consider the following 347-residue polypeptide: Phosphate acyltransferase (347 aa).

The protein belongs to the PlsX family. As to quaternary structure, homodimer. Probably interacts with PlsY.

It is found in the cytoplasm. The catalysed reaction is a fatty acyl-[ACP] + phosphate = an acyl phosphate + holo-[ACP]. The protein operates within lipid metabolism; phospholipid metabolism. In terms of biological role, catalyzes the reversible formation of acyl-phosphate (acyl-PO(4)) from acyl-[acyl-carrier-protein] (acyl-ACP). This enzyme utilizes acyl-ACP as fatty acyl donor, but not acyl-CoA. This Rhizobium meliloti (strain 1021) (Ensifer meliloti) protein is Phosphate acyltransferase.